We begin with the raw amino-acid sequence, 152 residues long: Ribonuclease HI (152 aa).

Positions 1–142 constitute an RNase H type-1 domain; the sequence is MDSKVVIYTD…ADKLAVQGRE (142 aa). Positions 10, 48, 70, and 134 each coordinate Mg(2+).

This sequence belongs to the RNase H family. In terms of assembly, monomer. Mg(2+) serves as cofactor.

The protein localises to the cytoplasm. It carries out the reaction Endonucleolytic cleavage to 5'-phosphomonoester.. Its function is as follows. Endonuclease that specifically degrades the RNA of RNA-DNA hybrids. This is Ribonuclease HI from Rickettsia conorii (strain ATCC VR-613 / Malish 7).